Consider the following 879-residue polypeptide: uncharacterized protein (879 aa).

A helical membrane pass occupies residues 14-34; that stretch reads LAFFGCGVSVGAFFTLFLMGT.

It is found in the membrane. This is an uncharacterized protein from Mycoplasma pneumoniae (strain ATCC 29342 / M129 / Subtype 1) (Mycoplasmoides pneumoniae).